The following is a 376-amino-acid chain: D-alanine--D-alanine ligase (376 aa).

Residues 155-361 enclose the ATP-grasp domain; sequence KIIFEKAGIP…YPELIEKLID (207 aa). 188-243 lines the ATP pocket; the sequence is EEKFSYPVFVKPSNAGSSVGVSKAHDKNELKEALIYAARYDRKVLIEEFINGREVE. Mg(2+) contacts are provided by aspartate 314, glutamate 328, and asparagine 330.

This sequence belongs to the D-alanine--D-alanine ligase family. Mg(2+) is required as a cofactor. Mn(2+) serves as cofactor.

It is found in the cytoplasm. It carries out the reaction 2 D-alanine + ATP = D-alanyl-D-alanine + ADP + phosphate + H(+). Its pathway is cell wall biogenesis; peptidoglycan biosynthesis. In terms of biological role, cell wall formation. This Acetivibrio thermocellus (strain ATCC 27405 / DSM 1237 / JCM 9322 / NBRC 103400 / NCIMB 10682 / NRRL B-4536 / VPI 7372) (Clostridium thermocellum) protein is D-alanine--D-alanine ligase.